The following is a 361-amino-acid chain: D-alanine--D-alanine ligase (361 aa).

Residues 144–350 (KLAAADAGLA…FMELTDRLIR (207 aa)) form the ATP-grasp domain. 177-232 (VASLSFPMFVKPVSLGSSVGITKVNSESELAEAITHACSLDSKVLIEQAVKGREVE) contributes to the ATP binding site. Residues D303, E317, and N319 each coordinate Mg(2+).

The protein belongs to the D-alanine--D-alanine ligase family. Requires Mg(2+) as cofactor. Mn(2+) serves as cofactor.

It localises to the cytoplasm. The catalysed reaction is 2 D-alanine + ATP = D-alanyl-D-alanine + ADP + phosphate + H(+). The protein operates within cell wall biogenesis; peptidoglycan biosynthesis. Functionally, cell wall formation. The polypeptide is D-alanine--D-alanine ligase (Chlorobium luteolum (strain DSM 273 / BCRC 81028 / 2530) (Pelodictyon luteolum)).